We begin with the raw amino-acid sequence, 323 residues long: Aspartate carbamoyltransferase catalytic subunit (323 aa).

Residues Arg61 and Thr62 each coordinate carbamoyl phosphate. Position 89 (Lys89) interacts with L-aspartate. Carbamoyl phosphate-binding residues include Arg111, His144, and Gln147. The L-aspartate site is built by Arg184 and Arg238. Residues Gly279 and Pro280 each coordinate carbamoyl phosphate.

It belongs to the aspartate/ornithine carbamoyltransferase superfamily. ATCase family. In terms of assembly, heterododecamer (2C3:3R2) of six catalytic PyrB chains organized as two trimers (C3), and six regulatory PyrI chains organized as three dimers (R2).

The enzyme catalyses carbamoyl phosphate + L-aspartate = N-carbamoyl-L-aspartate + phosphate + H(+). Its pathway is pyrimidine metabolism; UMP biosynthesis via de novo pathway; (S)-dihydroorotate from bicarbonate: step 2/3. Catalyzes the condensation of carbamoyl phosphate and aspartate to form carbamoyl aspartate and inorganic phosphate, the committed step in the de novo pyrimidine nucleotide biosynthesis pathway. This Acaryochloris marina (strain MBIC 11017) protein is Aspartate carbamoyltransferase catalytic subunit.